A 412-amino-acid chain; its full sequence is Protein MT3510 (412 aa).

N6-(pyridoxal phosphate)lysine is present on Lys227.

Belongs to the DegT/DnrJ/EryC1 family.

This Mycobacterium tuberculosis (strain CDC 1551 / Oshkosh) protein is Protein MT3510.